We begin with the raw amino-acid sequence, 347 residues long: Probable dual-specificity RNA methyltransferase RlmN (347 aa).

E90 serves as the catalytic Proton acceptor. A Radical SAM core domain is found at Y96–D326. C103 and C331 are joined by a disulfide. 3 residues coordinate [4Fe-4S] cluster: C110, C114, and C117. S-adenosyl-L-methionine contacts are provided by residues G157–E158, S189, S212–H214, and N288. The active-site S-methylcysteine intermediate is C331.

This sequence belongs to the radical SAM superfamily. RlmN family. [4Fe-4S] cluster serves as cofactor.

The protein resides in the cytoplasm. It carries out the reaction adenosine(2503) in 23S rRNA + 2 reduced [2Fe-2S]-[ferredoxin] + 2 S-adenosyl-L-methionine = 2-methyladenosine(2503) in 23S rRNA + 5'-deoxyadenosine + L-methionine + 2 oxidized [2Fe-2S]-[ferredoxin] + S-adenosyl-L-homocysteine. It catalyses the reaction adenosine(37) in tRNA + 2 reduced [2Fe-2S]-[ferredoxin] + 2 S-adenosyl-L-methionine = 2-methyladenosine(37) in tRNA + 5'-deoxyadenosine + L-methionine + 2 oxidized [2Fe-2S]-[ferredoxin] + S-adenosyl-L-homocysteine. Functionally, specifically methylates position 2 of adenine 2503 in 23S rRNA and position 2 of adenine 37 in tRNAs. This is Probable dual-specificity RNA methyltransferase RlmN from Clostridium botulinum (strain Alaska E43 / Type E3).